We begin with the raw amino-acid sequence, 263 residues long: Small ribosomal subunit protein uS2 (263 aa).

Belongs to the universal ribosomal protein uS2 family.

The sequence is that of Small ribosomal subunit protein uS2 from Hyphomonas neptunium (strain ATCC 15444).